Consider the following 466-residue polypeptide: UDP-N-acetylmuramoylalanine--D-glutamate ligase (466 aa).

ATP is bound at residue 121–127 (GTNGKST).

It belongs to the MurCDEF family.

The protein localises to the cytoplasm. It carries out the reaction UDP-N-acetyl-alpha-D-muramoyl-L-alanine + D-glutamate + ATP = UDP-N-acetyl-alpha-D-muramoyl-L-alanyl-D-glutamate + ADP + phosphate + H(+). It functions in the pathway cell wall biogenesis; peptidoglycan biosynthesis. Its function is as follows. Cell wall formation. Catalyzes the addition of glutamate to the nucleotide precursor UDP-N-acetylmuramoyl-L-alanine (UMA). This is UDP-N-acetylmuramoylalanine--D-glutamate ligase from Nitrobacter winogradskyi (strain ATCC 25391 / DSM 10237 / CIP 104748 / NCIMB 11846 / Nb-255).